The sequence spans 213 residues: MTHNTMLQRFNGLLEPTHLYIVSVVAYSACNRPDKISGIAKEAMEHVGPSIYPKLREALVKSSPLVGFPRTINSLREMTTNIPPPFPDEFARAADADIDTGKRGKIYFEKTYGKVTQRVLRSMQSSSLDLANIALDYAYGKVLSFNEVVSPLETSLMIIAALVPQDVNPQLRGHLKGALNHGATKEQVMSARNIALEISKECGIQFKGDIETL.

The Peroxisomal target signal 1 (PTS1) signature appears at 211-213 (ETL).

It belongs to the PXP2 family.

It localises to the peroxisome matrix. Its subcellular location is the cytoplasm. The protein localises to the cytosol. The protein resides in the nucleus. Its function is as follows. Probably involved in peroxisome formation or maintenance as well as in amino acid metabolism. This chain is Peroxisomal protein 2, found in Schizosaccharomyces pombe (strain 972 / ATCC 24843) (Fission yeast).